We begin with the raw amino-acid sequence, 256 residues long: Small ribosomal subunit protein eS1 (256 aa).

Ala2 is modified (N-acetylalanine; partial).

This sequence belongs to the eukaryotic ribosomal protein eS1 family. As to quaternary structure, component of the small ribosomal subunit. Mature ribosomes consist of a small (40S) and a large (60S) subunit. The 40S subunit contains about 33 different proteins and 1 molecule of RNA (18S). The 60S subunit contains about 49 different proteins and 3 molecules of RNA (25S, 5.8S and 5S).

Its subcellular location is the cytoplasm. The protein is Small ribosomal subunit protein eS1 (rps1) of Sclerotinia sclerotiorum (strain ATCC 18683 / 1980 / Ss-1) (White mold).